The chain runs to 183 residues: Guanylate kinase (183 aa).

The Guanylate kinase-like domain occupies 4–182; it reads GRVVVLTGPS…AITALEAAIF (179 aa). 11 to 18 contributes to the ATP binding site; the sequence is GPSGVGKG.

The protein belongs to the guanylate kinase family.

The protein resides in the cytoplasm. It catalyses the reaction GMP + ATP = GDP + ADP. The catalysed reaction is dZMP + ATP = dZDP + ADP. Its pathway is purine metabolism. In terms of biological role, essential for recycling GMP and indirectly, cGMP. (Microbial infection) Catalyzes the phosphorylation of dZMP to dZDP, when the bacterium is infected by a phage that produces the substrate for the synthesis of dZTP (2- amino-2'-deoxyadenosine 5'-triphosphate), which is then used by the phage as a DNA polymerase substrate. This chain is Guanylate kinase, found in Synechococcus elongatus (strain ATCC 33912 / PCC 7942 / FACHB-805) (Anacystis nidulans R2).